A 369-amino-acid polypeptide reads, in one-letter code: uncharacterized protein (369 aa).

A run of 9 helical transmembrane segments spans residues 25–45, 47–67, 119–139, 152–172, 206–226, 235–255, 272–292, 296–316, and 323–343; these read QFVA…WYDW, FCLL…FVPA, LNIV…FNLM, LSGF…FSAL, HALN…LLFV, LKPL…SLYL, PIAL…GVFG, FGIY…TVFL, and LIFF…FTVA.

The protein to B.subtilis ComEC.

The protein resides in the cell membrane. This is an uncharacterized protein from Mycoplasma genitalium (strain ATCC 33530 / DSM 19775 / NCTC 10195 / G37) (Mycoplasmoides genitalium).